The following is a 73-amino-acid chain: Sec-independent protein translocase protein TatA (73 aa).

A helical membrane pass occupies residues 1–21; it reads MGLSWQQLLILLLVVVVIFGT.

This sequence belongs to the TatA/E family. In terms of assembly, the Tat system comprises two distinct complexes: a TatABC complex, containing multiple copies of TatA, TatB and TatC subunits, and a separate TatA complex, containing only TatA subunits. Substrates initially bind to the TatABC complex, which probably triggers association of the separate TatA complex to form the active translocon.

It localises to the cell inner membrane. Part of the twin-arginine translocation (Tat) system that transports large folded proteins containing a characteristic twin-arginine motif in their signal peptide across membranes. TatA could form the protein-conducting channel of the Tat system. The chain is Sec-independent protein translocase protein TatA from Histophilus somni (strain 129Pt) (Haemophilus somnus).